The primary structure comprises 504 residues: ATP synthase subunit alpha (504 aa).

169–176 (GDRQTGKT) is an ATP binding site.

The protein belongs to the ATPase alpha/beta chains family. As to quaternary structure, F-type ATPases have 2 components, CF(1) - the catalytic core - and CF(0) - the membrane proton channel. CF(1) has five subunits: alpha(3), beta(3), gamma(1), delta(1), epsilon(1). CF(0) has three main subunits: a(1), b(2) and c(9-12). The alpha and beta chains form an alternating ring which encloses part of the gamma chain. CF(1) is attached to CF(0) by a central stalk formed by the gamma and epsilon chains, while a peripheral stalk is formed by the delta and b chains.

The protein resides in the cell membrane. It catalyses the reaction ATP + H2O + 4 H(+)(in) = ADP + phosphate + 5 H(+)(out). In terms of biological role, produces ATP from ADP in the presence of a proton gradient across the membrane. The alpha chain is a regulatory subunit. This is ATP synthase subunit alpha from Clostridium kluyveri (strain ATCC 8527 / DSM 555 / NBRC 12016 / NCIMB 10680 / K1).